We begin with the raw amino-acid sequence, 142 residues long: Large ribosomal subunit protein uL13 (142 aa).

Belongs to the universal ribosomal protein uL13 family. As to quaternary structure, part of the 50S ribosomal subunit.

In terms of biological role, this protein is one of the early assembly proteins of the 50S ribosomal subunit, although it is not seen to bind rRNA by itself. It is important during the early stages of 50S assembly. The chain is Large ribosomal subunit protein uL13 from Ralstonia pickettii (strain 12J).